The sequence spans 297 residues: ATP phosphoribosyltransferase (297 aa).

The protein belongs to the ATP phosphoribosyltransferase family.

The protein localises to the cytoplasm. It catalyses the reaction 1-(5-phospho-beta-D-ribosyl)-ATP + diphosphate = 5-phospho-alpha-D-ribose 1-diphosphate + ATP. Its pathway is amino-acid biosynthesis; L-histidine biosynthesis; L-histidine from 5-phospho-alpha-D-ribose 1-diphosphate: step 1/9. Catalyzes the condensation of ATP and 5-phosphoribose 1-diphosphate to form N'-(5'-phosphoribosyl)-ATP (PR-ATP). Has a crucial role in the pathway because the rate of histidine biosynthesis seems to be controlled primarily by regulation of the enzymatic activity. The protein is ATP phosphoribosyltransferase (HIS1) of Eremothecium gossypii (strain ATCC 10895 / CBS 109.51 / FGSC 9923 / NRRL Y-1056) (Yeast).